The sequence spans 131 residues: MPPKGKSGSGKGGKGKAASGSESSEKKAQGPKGGGNAVKVRHILCEKHGKILEAMEKLKSGMKFNEVAAQYSEDKARQGGDLGWMTRGSMVGPFQEAAFALPISVLDKPVFTDPPVKTKFGYHIIMVEGRK.

The segment at M1 to E25 is necessary for nuclear localization and DNA-binding. The tract at residues M1–A37 is disordered. The interval M1–R41 is necessary for association with the pre-rRNP complexes. S19 carries the post-translational modification Phosphoserine; by CK2. One can recognise a PpiC domain in the interval G35 to G129.

Belongs to the PpiC/parvulin rotamase family. PIN4 subfamily. As to quaternary structure, found in pre-ribosomal ribonucleoprotein (pre-rRNP) complexes. Post-translationally, phosphorylated. Phosphorylation occurs both in the nucleus and the cytoplasm. Phosphorylation at Ser-19 does not affect its PPIase activity but is required for nuclear localization, and the dephosphorylation is a prerequisite for the binding to DNA. The unphosphorylated form associates with the pre-rRNP complexes in the nucleus.

The protein resides in the nucleus. It localises to the nucleolus. The protein localises to the cytoplasm. It is found in the cytoskeleton. Its subcellular location is the spindle. It catalyses the reaction [protein]-peptidylproline (omega=180) = [protein]-peptidylproline (omega=0). Its function is as follows. Involved as a ribosomal RNA processing factor in ribosome biogenesis. Binds to tightly bent AT-rich stretches of double-stranded DNA. In Bos taurus (Bovine), this protein is Peptidyl-prolyl cis-trans isomerase NIMA-interacting 4 (PIN4).